Consider the following 572-residue polypeptide: Urease subunit alpha (572 aa).

The region spanning 134-572 (GGIDAHVHMI…VSLGQLYFFS (439 aa)) is the Urease domain. The Ni(2+) site is built by His-139, His-141, and Lys-222. Lys-222 is modified (N6-carboxylysine). His-224 lines the substrate pocket. Ni(2+) is bound by residues His-251 and His-277. His-325 serves as the catalytic Proton donor. Position 365 (Asp-365) interacts with Ni(2+).

Belongs to the metallo-dependent hydrolases superfamily. Urease alpha subunit family. In terms of assembly, heterotrimer of UreA (gamma), UreB (beta) and UreC (alpha) subunits. Three heterotrimers associate to form the active enzyme. Requires Ni cation as cofactor. In terms of processing, carboxylation allows a single lysine to coordinate two nickel ions.

It is found in the cytoplasm. The enzyme catalyses urea + 2 H2O + H(+) = hydrogencarbonate + 2 NH4(+). Its pathway is nitrogen metabolism; urea degradation; CO(2) and NH(3) from urea (urease route): step 1/1. This is Urease subunit alpha from Laribacter hongkongensis (strain HLHK9).